The chain runs to 62 residues: PGLAAAIPAPPESQEKKPLKPCCACPETKKARDACIIEKGEEHCGHLIEAHKECMRALGFKI.

Ser13 bears the Phosphoserine mark. An N6-acetyllysine modification is found at Lys17. Residues Cys22 and Cys23 each coordinate Cu cation. The CHCH domain maps to 22–62 (CCACPETKKARDACIIEKGEEHCGHLIEAHKECMRALGFKI). Short sequence motifs (cx9C motif) lie at residues 25 to 35 (CPETKKARDAC) and 44 to 54 (CGHLIEAHKEC). 2 disulfide bridges follow: Cys25-Cys54 and Cys35-Cys44. The residue at position 29 (Lys29) is an N6-acetyllysine.

This sequence belongs to the COX17 family. In terms of assembly, interacts with COA1. Interacts with the chaperone CHCHD4; this is important for correct folding and the formation of disulfide bonds that stabilize the structure. Acetylation by KAT8 promotes assembly of the mitochondrial respiratory chain complex IV (CIV).

Its subcellular location is the mitochondrion intermembrane space. It localises to the cytoplasm. Copper metallochaperone essential for the assembly of the mitochondrial respiratory chain complex IV (CIV), also known as cytochrome c oxidase. Binds two copper ions and delivers them to the metallochaperone SCO1 which transports the copper ions to the Cu(A) site on the cytochrome c oxidase subunit II (MT-CO2/COX2). The chain is Cytochrome c oxidase copper chaperone (COX17) from Sus scrofa (Pig).